The following is a 396-amino-acid chain: MELDHMTTGGLHAYPAPRGGPAAKPNVILQIGKCRAEMLEHVRRTHRHLLTEVSKQVERELKGLHRSVGKLENNLDGYVPTGDSQRWKKSIKACLCRCQETIANLERWVKREMHVWREVFYRLERWADRLESMGGKYPVGSEPARHTVSVGVGGPEPYCQEADGYDYTVSPYAITPPPAAGELPEQESVGAQQYQSWVPGEDGQPSPGVDTQIFEDPREFLSHLEEYLRQVGGSEEYWLSQIQNHMNGPAKKWWEFKQGSVKNWVEFKKEFLQYSEGTLSREAIQRELDLPQKQGEPLDQFLWRKRDLYQTLYVDAEEEEIIQYVVGTLQPKFKRFLRHPLPKTLEQLIQRGMEVQDGLEQAAEPSVTPLPTEDETEALTPALTSESVASDRTQPE.

Residues 54–78 adopt a coiled-coil conformation; it reads SKQVERELKGLHRSVGKLENNLDGY. The interval 89 to 100 is interaction with SH3GL1 or SH3GL3; sequence KSIKACLCRCQE. Positions 195 to 214 are interaction with DNM2; sequence QSWVPGEDGQPSPGVDTQIF. A Phosphoserine modification is found at S260. Residues K268 and K269 each participate in a glycyl lysine isopeptide (Lys-Gly) (interchain with G-Cter in ubiquitin) cross-link. T278 carries the phosphothreonine modification. The interval 358-396 is disordered; sequence GLEQAAEPSVTPLPTEDETEALTPALTSESVASDRTQPE. A compositionally biased stretch (polar residues) spans 382–396; the sequence is ALTSESVASDRTQPE.

It belongs to the ARC/ARG3.1 family. As to quaternary structure, homooligomer; homooligomerizes into virion-like capsids. Interacts with SH3GL1/endophilin-2, SH3GL3/endophilin-3 and DNM2/DYN2. Interacts with CAMK2B (in the kinase inactive state); leading to target ARC to inactive synapses. Interacts with PSEN1. Interacts with GRIN2A and GRIN2B; inhibiting homooligomerization. In terms of processing, palmitoylation anchors the protein into the membrane by allowing direct insertion into the hydrophobic core of the lipid bilayer. Ubiquitinated by UBE3A, leading to its degradation by the proteasome, thereby promoting AMPA receptors (AMPARs) expression at synapses. Ubiquitinated by RNF216 at Lys-268 and Lys-269 limiting ARC protein levels induced by synaptic activity and thus regulating ARC-dependent forms of synaptic plasticity. Post-translationally, phosphorylation at Ser-260 by CaMK2 prevents homooligomerization into virion-like capsids by disrupting an interaction surface essential for high-order oligomerization. Phosphorylation by CaMK2 inhibits synaptic activity. Expressed exclusively in certain parts of the brain including cortex and molecular layer of the hippocampus. Typically expressed at high level in a minority of neurons. Basal expression higher in cortex than in hippocampus, highest in visual cortex.

Its subcellular location is the extracellular vesicle membrane. It is found in the postsynaptic cell membrane. The protein localises to the synapse. The protein resides in the postsynaptic density. It localises to the early endosome membrane. Its subcellular location is the cell projection. It is found in the dendrite. The protein localises to the cytoplasm. The protein resides in the cytoskeleton. It localises to the cell cortex. Its subcellular location is the dendritic spine. It is found in the cytoplasmic vesicle. The protein localises to the secretory vesicle. The protein resides in the acrosome. It localises to the clathrin-coated vesicle membrane. Its function is as follows. Master regulator of synaptic plasticity that self-assembles into virion-like capsids that encapsulate RNAs and mediate intercellular RNA transfer in the nervous system. ARC protein is released from neurons in extracellular vesicles that mediate the transfer of ARC mRNA into new target cells, where ARC mRNA can undergo activity-dependent translation. ARC capsids are endocytosed and are able to transfer ARC mRNA into the cytoplasm of neurons. Acts as a key regulator of synaptic plasticity: required for protein synthesis-dependent forms of long-term potentiation (LTP) and depression (LTD) and for the formation of long-term memory. Regulates synaptic plasticity by promoting endocytosis of AMPA receptors (AMPARs) in response to synaptic activity: this endocytic pathway maintains levels of surface AMPARs in response to chronic changes in neuronal activity through synaptic scaling, thereby contributing to neuronal homeostasis. Acts as a postsynaptic mediator of activity-dependent synapse elimination in the developing cerebellum by mediating elimination of surplus climbing fiber synapses. Accumulates at weaker synapses, probably to prevent their undesired enhancement. This suggests that ARC-containing virion-like capsids may be required to eliminate synaptic material. Required to transduce experience into long-lasting changes in visual cortex plasticity and for long-term memory. Involved in postsynaptic trafficking and processing of amyloid-beta A4 (APP) via interaction with PSEN1. In addition to its role in synapses, also involved in the regulation of the immune system: specifically expressed in skin-migratory dendritic cells and regulates fast dendritic cell migration, thereby regulating T-cell activation. This Rattus norvegicus (Rat) protein is Activity-regulated cytoskeleton-associated protein.